A 442-amino-acid polypeptide reads, in one-letter code: Proline--tRNA ligase (442 aa).

Belongs to the class-II aminoacyl-tRNA synthetase family. ProS type 2 subfamily. In terms of assembly, homodimer.

Its subcellular location is the cytoplasm. It catalyses the reaction tRNA(Pro) + L-proline + ATP = L-prolyl-tRNA(Pro) + AMP + diphosphate. Its function is as follows. Catalyzes the attachment of proline to tRNA(Pro) in a two-step reaction: proline is first activated by ATP to form Pro-AMP and then transferred to the acceptor end of tRNA(Pro). The protein is Proline--tRNA ligase of Brucella suis (strain ATCC 23445 / NCTC 10510).